The following is a 304-amino-acid chain: Oxygen-dependent coproporphyrinogen-III oxidase (304 aa).

A substrate-binding site is contributed by serine 94. A divalent metal cation is bound by residues histidine 98 and histidine 108. Histidine 108 serves as the catalytic Proton donor. 110–112 (NVR) contacts substrate. The a divalent metal cation site is built by histidine 147 and histidine 177. Positions 242-277 (YVEFNLVYDRGTLFGLQTGGRTESILMSMPPLVRWE) are important for dimerization. 260 to 262 (GGR) is a substrate binding site.

Belongs to the aerobic coproporphyrinogen-III oxidase family. Homodimer. The cofactor is a divalent metal cation.

The protein localises to the cytoplasm. The catalysed reaction is coproporphyrinogen III + O2 + 2 H(+) = protoporphyrinogen IX + 2 CO2 + 2 H2O. It functions in the pathway porphyrin-containing compound metabolism; protoporphyrin-IX biosynthesis; protoporphyrinogen-IX from coproporphyrinogen-III (O2 route): step 1/1. Its function is as follows. Involved in the heme biosynthesis. Catalyzes the aerobic oxidative decarboxylation of propionate groups of rings A and B of coproporphyrinogen-III to yield the vinyl groups in protoporphyrinogen-IX. This is Oxygen-dependent coproporphyrinogen-III oxidase from Shewanella pealeana (strain ATCC 700345 / ANG-SQ1).